The following is a 2289-amino-acid chain: DNA polymerase II large subunit (2289 aa).

2 disordered regions span residues 279 to 330 (IGSD…SPRA) and 544 to 563 (SDTNSASGNTSLRANTNTDD). Positions 292–304 (GEADIVKTDKDTN) are enriched in basic and acidic residues. A compositionally biased stretch (acidic residues) spans 305–318 (ESETEDGIDNDDYN). Polar residues predominate over residues 544 to 557 (SDTNSASGNTSLRA). DOD-type homing endonuclease domains are found at residues 1222–1367 (LLGY…RLGI) and 1755–1911 (LLGQ…RLGV).

The protein belongs to the archaeal DNA polymerase II family. As to quaternary structure, heterodimer of a large subunit and a small subunit. In terms of processing, this protein undergoes a protein self splicing that involves a post-translational excision of the intervening region (intein) followed by peptide ligation.

It catalyses the reaction DNA(n) + a 2'-deoxyribonucleoside 5'-triphosphate = DNA(n+1) + diphosphate. The enzyme catalyses Exonucleolytic cleavage in the 3'- to 5'-direction to yield nucleoside 5'-phosphates.. Functionally, possesses two activities: a DNA synthesis (polymerase) and an exonucleolytic activity that degrades single-stranded DNA in the 3'- to 5'-direction. Has a template-primer preference which is characteristic of a replicative DNA polymerase. The protein is DNA polymerase II large subunit of Haloquadratum walsbyi (strain DSM 16790 / HBSQ001).